We begin with the raw amino-acid sequence, 398 residues long: MTRFDPFFQTALDDLDRRHLKRVLSPVDRDGPVIVRRDGASLLDFSSNDYLGLSHHPALRARAIDWTERFGIGSGASRLVTGTSEQYRQVEARLARFKGTEAALLLASGWQANAAVLPALLRISAAQTGEPALVFTDRLNHASLHHGCQAAGVRQIRFAHNDLGHLEHLLAQRQAQRGLRFIVTESVFSMDGDRADVAGLRTLADRYGAFLYLDEAHATGVLGPQGRGLSAEAGGVDLAMGTFSKALGGFGAYVAGSRAVCDWLVSTCSGFIYTTALPPGVLGVIDAALDLVPTLDAERAHLAGLADRMRAGAGALGWSTGPSSTQIVPVIVGAADRALTLARALAARGMLGTAIRPPTVPAGSARIRVALSAAHDETMVDRLLSALEDAAREHGIAP.

Positions 22 and 29 each coordinate substrate. 109–110 (GW) is a binding site for pyridoxal 5'-phosphate. H141 contacts substrate. Residues S189, 214-217 (DEAH), and 242-245 (TFSK) each bind pyridoxal 5'-phosphate. An N6-(pyridoxal phosphate)lysine modification is found at K245. T359 is a binding site for substrate.

It belongs to the class-II pyridoxal-phosphate-dependent aminotransferase family. BioF subfamily. Homodimer. It depends on pyridoxal 5'-phosphate as a cofactor.

It catalyses the reaction 6-carboxyhexanoyl-[ACP] + L-alanine + H(+) = (8S)-8-amino-7-oxononanoate + holo-[ACP] + CO2. The protein operates within cofactor biosynthesis; biotin biosynthesis. Functionally, catalyzes the decarboxylative condensation of pimeloyl-[acyl-carrier protein] and L-alanine to produce 8-amino-7-oxononanoate (AON), [acyl-carrier protein], and carbon dioxide. The polypeptide is 8-amino-7-oxononanoate synthase (Gluconacetobacter diazotrophicus (strain ATCC 49037 / DSM 5601 / CCUG 37298 / CIP 103539 / LMG 7603 / PAl5)).